The sequence spans 776 residues: Intermediate filament protein ifp-1 (776 aa).

Residues 1–23 (MDSANARDCLLHLARAKLSERQD) are head. An IF rod domain is found at 20–371 (ERQDLVQLND…ELLDRSGDPR (352 aa)). Positions 24 to 55 (LVQLNDQFVDIIEHVHYMEAEHTALEHDYNLL) are coil 1A. The linker 1 stretch occupies residues 56–69 (KSGVQSDSSGINEI). A coil 1B region spans residues 70–207 (YNVEIRTVRS…EDNKKIIMNE (138 aa)). The interval 208 to 224 (HKYFVRDRNADRHVFRD) is linker 12. The coil 2 stretch occupies residues 225 to 620 (QLRKAIADIR…QRGPHHSSYH (396 aa)). Disordered stretches follow at residues 453–473 (ASPIRPSYTPYQQESRADSRS) and 518–544 (NTTQINNPYASRTPTSSVNDRIASERR). A compositionally biased stretch (polar residues) spans 518-536 (NTTQINNPYASRTPTSSVN). The tract at residues 621 to 768 (AATGSVSNSI…WFVYTSNTEI (148 aa)) is tail. One can recognise an LTD domain in the interval 653–764 (NFQRFTRWYK…EVKSWFVYTS (112 aa)).

The protein belongs to the intermediate filament family.

It is found in the cytoplasm. Functionally, cytoplasmic intermediate filaments provide mechanical strength to cells. Not essential protein. This chain is Intermediate filament protein ifp-1 (ifp-1), found in Caenorhabditis elegans.